The primary structure comprises 346 residues: uncharacterized protein (346 aa).

The segment at 322-346 (GRDGGYRETTSPPTGRGRNVRGSHA) is disordered.

This is an uncharacterized protein from Mycobacterium tuberculosis (strain CDC 1551 / Oshkosh).